A 153-amino-acid chain; its full sequence is Holo-[acyl-carrier-protein] synthase (153 aa).

Mg(2+)-binding residues include D24 and E78.

Belongs to the P-Pant transferase superfamily. AcpS family. It depends on Mg(2+) as a cofactor.

The protein localises to the cytoplasm. It catalyses the reaction apo-[ACP] + CoA = holo-[ACP] + adenosine 3',5'-bisphosphate + H(+). Functionally, transfers the 4'-phosphopantetheine moiety from coenzyme A to a Ser of acyl-carrier-protein. The chain is Holo-[acyl-carrier-protein] synthase from Bordetella parapertussis (strain 12822 / ATCC BAA-587 / NCTC 13253).